A 228-amino-acid chain; its full sequence is Phosphoglycolate phosphatase (228 aa).

Asp9 (nucleophile) is an active-site residue. Residues Asp9 and Asp11 each coordinate Mg(2+). Lys151 contacts substrate. Residues Asp174 and Asp178 each contribute to the Mg(2+) site.

It belongs to the archaeal SPP-like hydrolase family. The cofactor is Mg(2+).

It catalyses the reaction 2-phosphoglycolate + H2O = glycolate + phosphate. Its function is as follows. Catalyzes the dephosphorylation of 2-phosphoglycolate. This Pyrobaculum neutrophilum (strain DSM 2338 / JCM 9278 / NBRC 100436 / V24Sta) (Thermoproteus neutrophilus) protein is Phosphoglycolate phosphatase.